A 253-amino-acid chain; its full sequence is Ribosomal RNA small subunit methyltransferase A (253 aa).

S-adenosyl-L-methionine-binding residues include histidine 12, leucine 14, glycine 39, glutamate 60, aspartate 81, and asparagine 104.

It belongs to the class I-like SAM-binding methyltransferase superfamily. rRNA adenine N(6)-methyltransferase family. RsmA subfamily.

The protein localises to the cytoplasm. It carries out the reaction adenosine(1518)/adenosine(1519) in 16S rRNA + 4 S-adenosyl-L-methionine = N(6)-dimethyladenosine(1518)/N(6)-dimethyladenosine(1519) in 16S rRNA + 4 S-adenosyl-L-homocysteine + 4 H(+). Specifically dimethylates two adjacent adenosines (A1518 and A1519) in the loop of a conserved hairpin near the 3'-end of 16S rRNA in the 30S particle. May play a critical role in biogenesis of 30S subunits. This chain is Ribosomal RNA small subunit methyltransferase A, found in Paracidovorax citrulli (strain AAC00-1) (Acidovorax citrulli).